The sequence spans 480 residues: Probable efflux pump outer membrane protein SepC (480 aa).

Positions 1–16 (MKTHYLSIALSVALSG) are cleaved as a signal peptide. Residue Cys17 is the site of N-palmitoyl cysteine attachment. A lipid anchor (S-diacylglycerol cysteine) is attached at Cys17.

Belongs to the outer membrane factor (OMF) (TC 1.B.17) family.

Its subcellular location is the cell outer membrane. In terms of biological role, probable outer membrane component of the SepABC efflux pump with unknown specificity. This chain is Probable efflux pump outer membrane protein SepC (sepC), found in Pseudomonas putida (strain ATCC 700007 / DSM 6899 / JCM 31910 / BCRC 17059 / LMG 24140 / F1).